The chain runs to 294 residues: Type I ribosome-inactivating protein trichoanguina (294 aa).

The first 19 residues, 1–19, serve as a signal peptide directing secretion; it reads MALSFFFLAISLGSPTAIG. The N-linked (GlcNAc...) asparagine glycan is linked to asparagine 70. Catalysis depends on residues glutamate 177 and arginine 180. Asparagine 220 is a glycosylation site (N-linked (GlcNAc...) asparagine). Residues 265 to 294 constitute a propeptide that is removed on maturation; it reads VGSEYDIPTTILHPGAMGMLHNQNGNYVTM.

The protein belongs to the ribosome-inactivating protein family. Type 1 RIP subfamily.

It catalyses the reaction Endohydrolysis of the N-glycosidic bond at one specific adenosine on the 28S rRNA.. Inhibits protein synthesis by depurinating 28S rRNA in ribosomes. The polypeptide is Type I ribosome-inactivating protein trichoanguina (TCA) (Trichosanthes anguina (Snake gourd)).